We begin with the raw amino-acid sequence, 140 residues long: L-fucose mutarotase (140 aa).

The active-site Proton donor is H22. Residues D30, R107, and 129-131 (YGN) each bind substrate.

The protein belongs to the RbsD / FucU family. FucU mutarotase subfamily. Homodecamer.

The protein localises to the cytoplasm. It catalyses the reaction alpha-L-fucose = beta-L-fucose. The protein operates within carbohydrate metabolism; L-fucose metabolism. Its function is as follows. Involved in the anomeric conversion of L-fucose. In Salmonella gallinarum (strain 287/91 / NCTC 13346), this protein is L-fucose mutarotase.